A 252-amino-acid polypeptide reads, in one-letter code: 5'-nucleotidase SurE (252 aa).

The a divalent metal cation site is built by aspartate 8, aspartate 9, serine 39, and asparagine 91.

The protein belongs to the SurE nucleotidase family. Requires a divalent metal cation as cofactor.

The protein localises to the cytoplasm. The catalysed reaction is a ribonucleoside 5'-phosphate + H2O = a ribonucleoside + phosphate. In terms of biological role, nucleotidase that shows phosphatase activity on nucleoside 5'-monophosphates. This Bordetella petrii (strain ATCC BAA-461 / DSM 12804 / CCUG 43448) protein is 5'-nucleotidase SurE.